A 473-amino-acid polypeptide reads, in one-letter code: Inactive levansucrase (473 aa).

The first 29 residues, 1–29 (MNIKKFAKQATVLTFTTALLAGGATQAFA), serve as a signal peptide directing secretion.

It belongs to the glycosyl hydrolase 68 family.

The protein resides in the secreted. The protein is Inactive levansucrase (sacB) of Geobacillus stearothermophilus (Bacillus stearothermophilus).